A 417-amino-acid polypeptide reads, in one-letter code: NADP-specific glutamate dehydrogenase A1 (417 aa).

K105 is a catalytic residue.

This sequence belongs to the Glu/Leu/Phe/Val dehydrogenases family. Homohexamer.

The catalysed reaction is L-glutamate + NADP(+) + H2O = 2-oxoglutarate + NH4(+) + NADPH + H(+). The protein is NADP-specific glutamate dehydrogenase A1 (gdhA1) of Halobacterium salinarum (Halobacterium halobium).